Reading from the N-terminus, the 364-residue chain is Chorismate synthase (364 aa).

Position 48 (arginine 48) interacts with NADP(+). FMN is bound by residues 131–133, 243–244, glycine 288, 303–307, and arginine 329; these read RSS, NA, and KPTSS.

It belongs to the chorismate synthase family. Homotetramer. It depends on FMNH2 as a cofactor.

It carries out the reaction 5-O-(1-carboxyvinyl)-3-phosphoshikimate = chorismate + phosphate. It functions in the pathway metabolic intermediate biosynthesis; chorismate biosynthesis; chorismate from D-erythrose 4-phosphate and phosphoenolpyruvate: step 7/7. Functionally, catalyzes the anti-1,4-elimination of the C-3 phosphate and the C-6 proR hydrogen from 5-enolpyruvylshikimate-3-phosphate (EPSP) to yield chorismate, which is the branch point compound that serves as the starting substrate for the three terminal pathways of aromatic amino acid biosynthesis. This reaction introduces a second double bond into the aromatic ring system. The sequence is that of Chorismate synthase from Brucella anthropi (strain ATCC 49188 / DSM 6882 / CCUG 24695 / JCM 21032 / LMG 3331 / NBRC 15819 / NCTC 12168 / Alc 37) (Ochrobactrum anthropi).